The sequence spans 655 residues: Bifunctional lysine-specific demethylase and histidyl-hydroxylase NO66 (655 aa).

Polar residues predominate over residues 1–16; sequence MEKVTNSAAAKPQGNN. 2 disordered regions span residues 1-48 and 67-122; these read MEKV…LSDM and EDTD…QGAS. The segment covering 76 to 86 has biased composition (low complexity); the sequence is STSSKEAAAAK. Over residues 87–96 the composition is skewed to basic and acidic residues; it reads TADHERRLQA. The residue at position 131 (Ser-131) is a Phosphoserine. Thr-137 carries the phosphothreonine modification. A Phosphoserine modification is found at Ser-138. The disordered stretch occupies residues 185-210; that stretch reads KAPEEGNNNNDEKEMSTETSEPHKTD. Over residues 194 to 210 the composition is skewed to basic and acidic residues; sequence NDEKEMSTETSEPHKTD. Residues 307 to 452 enclose the JmjC domain; it reads CSIRLLHASA…NLLETLMPMV (146 aa). Fe cation is bound by residues His-353, Asp-355, and His-418.

The protein belongs to the ROX family. NO66 subfamily. Requires Fe(2+) as cofactor.

It localises to the nucleus. The catalysed reaction is N(6),N(6)-dimethyl-L-lysyl(36)-[histone H3] + 2 2-oxoglutarate + 2 O2 = L-lysyl(36)-[histone H3] + 2 formaldehyde + 2 succinate + 2 CO2. Oxygenase that can act as both a histone lysine demethylase and a ribosomal histidine hydroxylase. Specifically demethylates 'Lys-4' (H3K4me) and 'Lys-36' (H3K36me) of histone H3, thereby playing a central role in histone code. The chain is Bifunctional lysine-specific demethylase and histidyl-hydroxylase NO66 from Drosophila sechellia (Fruit fly).